The sequence spans 417 residues: MAP kinase-interacting serine/threonine-protein kinase 1 (417 aa).

The segment at 1-20 is disordered; the sequence is MVSSQPVPIDDGGKRRKKKR. Residues 37-321 form the Protein kinase domain; that stretch reads RLTDELLGEG…AAQVLQHPWL (285 aa). ATP contacts are provided by residues 43 to 51 and lysine 66; that span reads LGEGAYAKV. Aspartate 158 functions as the Proton acceptor in the catalytic mechanism. Positions 397 to 417 are disordered; it reads AHARKGGSHLTHTTVTSQGAT. Residues 406 to 417 show a composition bias toward polar residues; that stretch reads LTHTTVTSQGAT.

The protein belongs to the protein kinase superfamily. CAMK Ser/Thr protein kinase family. Mg(2+) is required as a cofactor.

It carries out the reaction L-seryl-[protein] + ATP = O-phospho-L-seryl-[protein] + ADP + H(+). The enzyme catalyses L-threonyl-[protein] + ATP = O-phospho-L-threonyl-[protein] + ADP + H(+). May play a role in the response to environmental stress and cytokines. Appears to regulate translation by phosphorylating EIF4E, thus increasing the affinity of this protein for the 7-methylguanosine-containing mRNA cap. This Xenopus tropicalis (Western clawed frog) protein is MAP kinase-interacting serine/threonine-protein kinase 1 (mknk1).